A 479-amino-acid chain; its full sequence is Glutamate--tRNA ligase (479 aa).

The short motif at 21–31 (PSPTGYLHVGG) is the 'HIGH' region element. The 'KMSKS' region motif lies at 248–252 (KLSKR). Lys251 provides a ligand contact to ATP.

It belongs to the class-I aminoacyl-tRNA synthetase family. Glutamate--tRNA ligase type 1 subfamily. Monomer.

It is found in the cytoplasm. The catalysed reaction is tRNA(Glu) + L-glutamate + ATP = L-glutamyl-tRNA(Glu) + AMP + diphosphate. Catalyzes the attachment of glutamate to tRNA(Glu) in a two-step reaction: glutamate is first activated by ATP to form Glu-AMP and then transferred to the acceptor end of tRNA(Glu). This chain is Glutamate--tRNA ligase, found in Actinobacillus pleuropneumoniae serotype 5b (strain L20).